The primary structure comprises 142 residues: Putative pre-16S rRNA nuclease (142 aa).

Belongs to the YqgF nuclease family.

Its subcellular location is the cytoplasm. In terms of biological role, could be a nuclease involved in processing of the 5'-end of pre-16S rRNA. The chain is Putative pre-16S rRNA nuclease from Chloroflexus aggregans (strain MD-66 / DSM 9485).